Consider the following 326-residue polypeptide: Probable pectate lyase B (326 aa).

Residues 1 to 15 (MRVTAILTLATIAIA) form the signal peptide. Ca(2+)-binding residues include Asp133, Asp162, and Asp166. Residue Arg219 is part of the active site.

The protein belongs to the polysaccharide lyase 1 family. It depends on Ca(2+) as a cofactor.

The protein resides in the secreted. The enzyme catalyses Eliminative cleavage of (1-&gt;4)-alpha-D-galacturonan to give oligosaccharides with 4-deoxy-alpha-D-galact-4-enuronosyl groups at their non-reducing ends.. Pectinolytic enzyme consist of four classes of enzymes: pectin lyase, polygalacturonase, pectin methylesterase and rhamnogalacturonase. Among pectinolytic enzymes, pectin lyase is the most important in depolymerization of pectin, since it cleaves internal glycosidic bonds of highly methylated pectins. Favors pectate, the anion, over pectin, the methyl ester. This chain is Probable pectate lyase B (plyB), found in Aspergillus flavus (strain ATCC 200026 / FGSC A1120 / IAM 13836 / NRRL 3357 / JCM 12722 / SRRC 167).